The chain runs to 395 residues: Digeranylgeranylglycerophospholipid reductase (395 aa).

Residues A15, D34, C45, A46, G48, R97, A121, D276, and G288 each coordinate FAD. Residues R329 and G365 each contribute to the a 2,3-bis-O-(geranylgeranyl)-sn-glycerol 1-phospholipid site.

This sequence belongs to the geranylgeranyl reductase family. DGGGPL reductase subfamily. The cofactor is FAD.

It catalyses the reaction a 2,3-bis-O-phytanyl-sn-glycerol 1-phospholipid + 8 A = a 2,3-bis-O-(geranylgeranyl)-sn-glycerol 1-phospholipid + 8 AH2. The enzyme catalyses 2,3-bis-O-(phytanyl)-sn-glycerol 1-phosphate + 8 A = 2,3-bis-O-(geranylgeranyl)-sn-glycerol 1-phosphate + 8 AH2. The catalysed reaction is CDP-2,3-bis-O-(geranylgeranyl)-sn-glycerol + 8 AH2 = CDP-2,3-bis-O-(phytanyl)-sn-glycerol + 8 A. It carries out the reaction archaetidylserine + 8 AH2 = 2,3-bis-O-phytanyl-sn-glycero-3-phospho-L-serine + 8 A. It participates in membrane lipid metabolism; glycerophospholipid metabolism. Its function is as follows. Is involved in the reduction of 2,3-digeranylgeranylglycerophospholipids (unsaturated archaeols) into 2,3-diphytanylglycerophospholipids (saturated archaeols) in the biosynthesis of archaeal membrane lipids. Catalyzes the formation of archaetidic acid (2,3-di-O-phytanyl-sn-glyceryl phosphate) from 2,3-di-O-geranylgeranylglyceryl phosphate (DGGGP) via the hydrogenation of each double bond of the isoprenoid chains. Is also probably able to reduce double bonds of geranyl groups in CDP-2,3-bis-O-(geranylgeranyl)-sn-glycerol and archaetidylserine, thus acting at various stages in the biosynthesis of archaeal membrane lipids. This is Digeranylgeranylglycerophospholipid reductase from Thermococcus gammatolerans (strain DSM 15229 / JCM 11827 / EJ3).